The chain runs to 473 residues: Ribulose bisphosphate carboxylase large chain 1 (473 aa).

Substrate is bound by residues asparagine 116 and threonine 166. Residue lysine 168 is the Proton acceptor of the active site. Lysine 170 lines the substrate pocket. Lysine 194, aspartate 196, and glutamate 197 together coordinate Mg(2+). Lysine 194 carries the N6-carboxylysine modification. The active-site Proton acceptor is histidine 287. Substrate contacts are provided by arginine 288, histidine 320, and serine 372.

The protein belongs to the RuBisCO large chain family. Type I subfamily. In terms of assembly, heterohexadecamer of 8 large chains and 8 small chains. It depends on Mg(2+) as a cofactor.

It catalyses the reaction 2 (2R)-3-phosphoglycerate + 2 H(+) = D-ribulose 1,5-bisphosphate + CO2 + H2O. The enzyme catalyses D-ribulose 1,5-bisphosphate + O2 = 2-phosphoglycolate + (2R)-3-phosphoglycerate + 2 H(+). Functionally, ruBisCO catalyzes two reactions: the carboxylation of D-ribulose 1,5-bisphosphate, the primary event in carbon dioxide fixation, as well as the oxidative fragmentation of the pentose substrate. Both reactions occur simultaneously and in competition at the same active site. This chain is Ribulose bisphosphate carboxylase large chain 1, found in Nitrobacter winogradskyi (strain ATCC 25391 / DSM 10237 / CIP 104748 / NCIMB 11846 / Nb-255).